Reading from the N-terminus, the 426-residue chain is MKKPIYKVLYVQVIVAIIIGIALGHFYPALATDMKPLGDAFIKLIKMVIGPIIFCTVVTGIAGMEDMKKVGRVGGKALLYFEIVSTFALILGLAATHLLRPGVGFNVDPATLNGKEVASYAAKAHGQTTVDFLMHIIPDTLVSAFSQGEILQILLIALLFGAVLAHVGERGKPVTNFIESLSSILFGMVGIITKLAPIGAFGAMAFTIGKYGIGSLLPMLKLIGTFYLTSIVFVVVVLGFIAKMVGFNILRFVAYIKEEMLIVLGTSSSEAALPQLMLKLEKLGCSRSVVGLVVPTGYSFNLDGTNIYMTMAVLFIAQATNTDLTWGQQLTLLAVTMLTSKGASGVTGAGFITLAATLAVVPTIPLSGMVLILGIDRFMSECRALTNIVGNGVATVVVSAWEKELDRSKLRAALSRDVSVTESAEV.

A run of 8 helical transmembrane segments spans residues 8–28 (VLYVQVIVAIIIGIALGHFYP), 44–64 (LIKMVIGPIIFCTVVTGIAGM), 78–98 (LLYFEIVSTFALILGLAATHL), 148–168 (GEILQILLIALLFGAVLAHVG), 184–204 (ILFGMVGIITKLAPIGAFGAM), 222–242 (LIGTFYLTSIVFVVVVLGFIA), 297–317 (GYSFNLDGTNIYMTMAVLFIA), and 355–375 (AATLAVVPTIPLSGMVLILGI).

This sequence belongs to the dicarboxylate/amino acid:cation symporter (DAACS) (TC 2.A.23) family.

The protein resides in the cell inner membrane. Its function is as follows. Responsible for the transport of dicarboxylates such as succinate, fumarate, and malate from the periplasm across the membrane. This is C4-dicarboxylate transport protein from Paraburkholderia phymatum (strain DSM 17167 / CIP 108236 / LMG 21445 / STM815) (Burkholderia phymatum).